Reading from the N-terminus, the 60-residue chain is MEKKFLDILVCPVTKGRLEYHQDKQELWSRQAKLAYPIKDGIPYMLENEARALGEEELKV.

This sequence belongs to the UPF0434 family.

This Neisseria meningitidis serogroup C (strain 053442) protein is UPF0434 protein NMCC_0628.